A 413-amino-acid polypeptide reads, in one-letter code: Serine hydroxymethyltransferase (413 aa).

Residues Leu120 and 124-126 (GHL) contribute to the (6S)-5,6,7,8-tetrahydrofolate site. The residue at position 229 (Lys229) is an N6-(pyridoxal phosphate)lysine. Position 352 to 354 (352 to 354 (SPF)) interacts with (6S)-5,6,7,8-tetrahydrofolate.

The protein belongs to the SHMT family. As to quaternary structure, homodimer. The cofactor is pyridoxal 5'-phosphate.

It localises to the cytoplasm. It carries out the reaction (6R)-5,10-methylene-5,6,7,8-tetrahydrofolate + glycine + H2O = (6S)-5,6,7,8-tetrahydrofolate + L-serine. It participates in one-carbon metabolism; tetrahydrofolate interconversion. The protein operates within amino-acid biosynthesis; glycine biosynthesis; glycine from L-serine: step 1/1. Catalyzes the reversible interconversion of serine and glycine with tetrahydrofolate (THF) serving as the one-carbon carrier. This reaction serves as the major source of one-carbon groups required for the biosynthesis of purines, thymidylate, methionine, and other important biomolecules. Also exhibits THF-independent aldolase activity toward beta-hydroxyamino acids, producing glycine and aldehydes, via a retro-aldol mechanism. The chain is Serine hydroxymethyltransferase from Heliobacterium modesticaldum (strain ATCC 51547 / Ice1).